The following is a 68-amino-acid chain: Large ribosomal subunit protein uL29 (68 aa).

It belongs to the universal ribosomal protein uL29 family.

This chain is Large ribosomal subunit protein uL29, found in Chlorobaculum parvum (strain DSM 263 / NCIMB 8327) (Chlorobium vibrioforme subsp. thiosulfatophilum).